The chain runs to 320 residues: Methionyl-tRNA formyltransferase (320 aa).

114–117 (SLLP) serves as a coordination point for (6S)-5,6,7,8-tetrahydrofolate.

Belongs to the Fmt family.

The enzyme catalyses L-methionyl-tRNA(fMet) + (6R)-10-formyltetrahydrofolate = N-formyl-L-methionyl-tRNA(fMet) + (6S)-5,6,7,8-tetrahydrofolate + H(+). Attaches a formyl group to the free amino group of methionyl-tRNA(fMet). The formyl group appears to play a dual role in the initiator identity of N-formylmethionyl-tRNA by promoting its recognition by IF2 and preventing the misappropriation of this tRNA by the elongation apparatus. This chain is Methionyl-tRNA formyltransferase, found in Acinetobacter baumannii (strain AB0057).